The sequence spans 612 residues: Coagulation factor X-activating enzyme heavy chain (612 aa).

Residues 1 to 20 (MMQVLLVTISLAVFPYQGSS) form the signal peptide. The propeptide at 21-193 (IILESGNVND…KKASQLVATS (173 aa)) is or 194. One can recognise a Peptidase M12B domain in the interval 201-395 (TFIELVIVVD…YKPKCILNPP (195 aa)). Glu204 is a binding site for Ca(2+). N-linked (GlcNAc...) asparagine glycosylation is present at Asn259. Asp286 contributes to the Ca(2+) binding site. 3 cysteine pairs are disulfide-bonded: Cys310–Cys390, Cys350–Cys374, and Cys352–Cys357. Position 335 (His335) interacts with Zn(2+). Glu336 is a catalytic residue. Residues His339 and His345 each coordinate Zn(2+). N-linked (GlcNAc...) asparagine glycosylation is found at Asn353 and Asn373. The Ca(2+) site is built by Cys390, Asn393, Ile405, Asn408, Glu412, Glu415, and Asp418. The Disintegrin domain maps to 403–489 (PPICGNEIWE…ECPADGFHAN (87 aa)). An intrachain disulfide couples Cys461 to Cys481. The short motif at 467–469 (ECD) is the D/ECD-tripeptide element.

It belongs to the venom metalloproteinase (M12B) family. P-III subfamily. P-IIId sub-subfamily. In terms of assembly, heterotrimer; disulfide-linked. The heterotrimer consists of 1 heavy chain and 2 light chains (lectins): LC1 and LC2 (AC Q7T045 and AC Q696W1). Zn(2+) is required as a cofactor. N-glycosylated. Contains 8.0% of hexoses, 2.5% of hexosamines and 2.5% of sialic acids. Expressed by the venom gland.

The protein localises to the secreted. It catalyses the reaction Specifically activates several components of the blood clotting system, including coagulation factor X, coagulation factor IX and protein C by cleavage of Arg-|-Xaa bonds. Has no action on insulin B chain.. With respect to regulation, calcium is required for the activity of the heterotrimer. Catalytic subunit of blood coagulation factor X-activating enzyme. Activates coagulation factor X (F10) by cleaving the Arg(234)-Ile(235) bond, activates coagulation factor IX (F9) by cleaving the Arg(226)-Val(227) bond and is also able to activate protein C (PROC). This chain is Coagulation factor X-activating enzyme heavy chain, found in Macrovipera lebetinus (Levantine viper).